A 431-amino-acid polypeptide reads, in one-letter code: tRNA(Ile)-lysidine synthase (431 aa).

25–30 contributes to the ATP binding site; that stretch reads SGGPDS.

It belongs to the tRNA(Ile)-lysidine synthase family.

The protein resides in the cytoplasm. It catalyses the reaction cytidine(34) in tRNA(Ile2) + L-lysine + ATP = lysidine(34) in tRNA(Ile2) + AMP + diphosphate + H(+). In terms of biological role, ligates lysine onto the cytidine present at position 34 of the AUA codon-specific tRNA(Ile) that contains the anticodon CAU, in an ATP-dependent manner. Cytidine is converted to lysidine, thus changing the amino acid specificity of the tRNA from methionine to isoleucine. This is tRNA(Ile)-lysidine synthase from Lactobacillus johnsonii (strain CNCM I-12250 / La1 / NCC 533).